The primary structure comprises 261 residues: Gap junction beta-6 protein (261 aa).

Residues 1-22 are Cytoplasmic-facing; it reads MDWGTLHTVIGGVNKHSTSIGK. A helical membrane pass occupies residues 23–45; sequence VWITVIFIFRVMILVVAAQEVWG. The Extracellular segment spans residues 46–75; the sequence is DEQEDFVCNTLQPGCKNVCYDHFFPVSHIR. A helical membrane pass occupies residues 76-98; that stretch reads LWALQLIFVSTPALLVAMHVAYY. The Cytoplasmic segment spans residues 99 to 131; the sequence is RHETARKFIRGEKRNEFKDLEDIKRQKVRIEGS. The helical transmembrane segment at 132-154 threads the bilayer; that stretch reads LWWTYTSSIFFRIIFEAAFMYVF. Residues 155–192 are Extracellular-facing; sequence YFLYNGYHLPWVLKCGIDPCPNLVDCFISRPTEKTVFT. Residues 193–215 form a helical membrane-spanning segment; it reads VFMISASVICMLLNVAELCYLLL. Residues 216 to 261 are Cytoplasmic-facing; that stretch reads KLCFRRSKRTQAQRNHPNHALKESKQNEMNELISDSGQNAITSFPS.

Belongs to the connexin family. Beta-type (group I) subfamily. A connexon is composed of a hexamer of connexins. Interacts with CNST. In terms of tissue distribution, highly expressed in adult brain and skin. Less in uterus, lung and eye. Very low in testis and sciatic nerve. No expression before birth.

Its subcellular location is the cell membrane. It is found in the cell junction. It localises to the gap junction. Its function is as follows. One gap junction consists of a cluster of closely packed pairs of transmembrane channels, the connexons, through which materials of low MW diffuse from one cell to a neighboring cell. The protein is Gap junction beta-6 protein (Gjb6) of Mus musculus (Mouse).